The primary structure comprises 374 residues: Queuine tRNA-ribosyltransferase (374 aa).

Residue D89 is the Proton acceptor of the active site. Substrate-binding positions include 89–93 (DSGGF), D143, Q187, and G214. Residues 245-251 (GVGKPED) are RNA binding. D264 serves as the catalytic Nucleophile. An RNA binding; important for wobble base 34 recognition region spans residues 269–273 (TRNAR). Positions 302, 304, 307, and 333 each coordinate Zn(2+).

The protein belongs to the queuine tRNA-ribosyltransferase family. Homodimer. Within each dimer, one monomer is responsible for RNA recognition and catalysis, while the other monomer binds to the replacement base PreQ1. Requires Zn(2+) as cofactor.

The enzyme catalyses 7-aminomethyl-7-carbaguanine + guanosine(34) in tRNA = 7-aminomethyl-7-carbaguanosine(34) in tRNA + guanine. It functions in the pathway tRNA modification; tRNA-queuosine biosynthesis. Its function is as follows. Catalyzes the base-exchange of a guanine (G) residue with the queuine precursor 7-aminomethyl-7-deazaguanine (PreQ1) at position 34 (anticodon wobble position) in tRNAs with GU(N) anticodons (tRNA-Asp, -Asn, -His and -Tyr). Catalysis occurs through a double-displacement mechanism. The nucleophile active site attacks the C1' of nucleotide 34 to detach the guanine base from the RNA, forming a covalent enzyme-RNA intermediate. The proton acceptor active site deprotonates the incoming PreQ1, allowing a nucleophilic attack on the C1' of the ribose to form the product. After dissociation, two additional enzymatic reactions on the tRNA convert PreQ1 to queuine (Q), resulting in the hypermodified nucleoside queuosine (7-(((4,5-cis-dihydroxy-2-cyclopenten-1-yl)amino)methyl)-7-deazaguanosine). In Serratia proteamaculans (strain 568), this protein is Queuine tRNA-ribosyltransferase.